Here is a 146-residue protein sequence, read N- to C-terminus: 3-hydroxyacyl-[acyl-carrier-protein] dehydratase FabZ (146 aa).

Residue His-47 is part of the active site.

It belongs to the thioester dehydratase family. FabZ subfamily.

The protein localises to the cytoplasm. The enzyme catalyses a (3R)-hydroxyacyl-[ACP] = a (2E)-enoyl-[ACP] + H2O. Functionally, involved in unsaturated fatty acids biosynthesis. Catalyzes the dehydration of short chain beta-hydroxyacyl-ACPs and long chain saturated and unsaturated beta-hydroxyacyl-ACPs. This Nitrosospira multiformis (strain ATCC 25196 / NCIMB 11849 / C 71) protein is 3-hydroxyacyl-[acyl-carrier-protein] dehydratase FabZ.